A 396-amino-acid polypeptide reads, in one-letter code: Tryptophan synthase beta chain (396 aa).

Residue lysine 86 is modified to N6-(pyridoxal phosphate)lysine.

It belongs to the TrpB family. As to quaternary structure, tetramer of two alpha and two beta chains. It depends on pyridoxal 5'-phosphate as a cofactor.

It carries out the reaction (1S,2R)-1-C-(indol-3-yl)glycerol 3-phosphate + L-serine = D-glyceraldehyde 3-phosphate + L-tryptophan + H2O. It functions in the pathway amino-acid biosynthesis; L-tryptophan biosynthesis; L-tryptophan from chorismate: step 5/5. In terms of biological role, the beta subunit is responsible for the synthesis of L-tryptophan from indole and L-serine. The sequence is that of Tryptophan synthase beta chain from Francisella philomiragia subsp. philomiragia (strain ATCC 25017 / CCUG 19701 / FSC 153 / O#319-036).